Reading from the N-terminus, the 555-residue chain is Glutamine--tRNA ligase (555 aa).

The 'HIGH' region signature appears at 34-44; that stretch reads PEPNGYLHIGH. Residues 35–37 and 41–47 each bind ATP; these read EPN and HIGHAKS. Residues aspartate 67 and tyrosine 212 each coordinate L-glutamine. Residues threonine 231, 261-262, and 269-271 contribute to the ATP site; these read RL and MSK. The 'KMSKS' region signature appears at 268–272; the sequence is VMSKR. The tract at residues 317-324 is interaction with tRNA; the sequence is TKQDNTIE.

Belongs to the class-I aminoacyl-tRNA synthetase family. As to quaternary structure, monomer.

The protein resides in the cytoplasm. It carries out the reaction tRNA(Gln) + L-glutamine + ATP = L-glutaminyl-tRNA(Gln) + AMP + diphosphate. In Salmonella schwarzengrund (strain CVM19633), this protein is Glutamine--tRNA ligase.